Here is a 470-residue protein sequence, read N- to C-terminus: Spliceosome-associated protein CWC27 homolog (470 aa).

Residues 11-166 form the PPIase cyclophilin-type domain; the sequence is TNGKVLLKTS…NPHKIRSTEV (156 aa). 2 stretches are compositionally biased toward basic and acidic residues: residues 172-192 and 230-240; these read DDII…EAKK and SSHDLLKDDPK. Disordered stretches follow at residues 172–377 and 428–470; these read DDII…SGRE and SRKV…KARR. Positions 254–272 are enriched in acidic residues; sequence GDFEDSDDDEDDAEDDSDR. Composition is skewed to basic and acidic residues over residues 273 to 337 and 356 to 367; these read EAEK…KKEE and LESRKKYDDMRK. Residues 281-332 adopt a coiled-coil conformation; it reads ENIAKKLKKDKTDEEKSSQDLVKKTSRSDELRKEARQLKKELLAIKQRKEDG.

This sequence belongs to the cyclophilin-type PPIase family. As to quaternary structure, part of the activated spliceosome B/catalytic step 1 spliceosome, one of the forms of the spliceosome which has a well-formed active site but still cannot catalyze the branching reaction and is composed at least of 52 proteins, the U2, U5 and U6 snRNAs and the pre-mRNA. Recruited during early steps of activated spliceosome B maturation, it is probably one of the first proteins released from this complex as he matures to the spliceosome C complex. Component of the minor spliceosome, which splices U12-type introns.

It localises to the nucleus. In terms of biological role, as part of the spliceosome, plays a role in pre-mRNA splicing. Probable inactive PPIase with no peptidyl-prolyl cis-trans isomerase activity. This is Spliceosome-associated protein CWC27 homolog (cwc27) from Danio rerio (Zebrafish).